The chain runs to 149 residues: Nucleoside diphosphate kinase (149 aa).

ATP contacts are provided by K9, F57, R85, T91, R102, and N112. Catalysis depends on H115, which acts as the Pros-phosphohistidine intermediate.

It belongs to the NDK family. Homotetramer. Mg(2+) serves as cofactor.

Its subcellular location is the cytoplasm. It catalyses the reaction a 2'-deoxyribonucleoside 5'-diphosphate + ATP = a 2'-deoxyribonucleoside 5'-triphosphate + ADP. It carries out the reaction a ribonucleoside 5'-diphosphate + ATP = a ribonucleoside 5'-triphosphate + ADP. Its function is as follows. Major role in the synthesis of nucleoside triphosphates other than ATP. The ATP gamma phosphate is transferred to the NDP beta phosphate via a ping-pong mechanism, using a phosphorylated active-site intermediate. The sequence is that of Nucleoside diphosphate kinase from Roseiflexus sp. (strain RS-1).